A 172-amino-acid polypeptide reads, in one-letter code: Peptidyl-prolyl cis-trans isomerase (172 aa).

Residues 7–170 enclose the PPIase cyclophilin-type domain; sequence FFDMTVGGAP…KVVKVADCGQ (164 aa).

The protein belongs to the cyclophilin-type PPIase family.

It is found in the cytoplasm. The catalysed reaction is [protein]-peptidylproline (omega=180) = [protein]-peptidylproline (omega=0). Its activity is regulated as follows. Binds cyclosporin A (CsA). CsA mediates some of its effects via an inhibitory action on PPIase. In terms of biological role, PPIases accelerate the folding of proteins. It catalyzes the cis-trans isomerization of proline imidic peptide bonds in oligopeptides. The protein is Peptidyl-prolyl cis-trans isomerase (CYP) of Zea mays (Maize).